Consider the following 338-residue polypeptide: Heat-inducible transcription repressor HrcA (338 aa).

The protein belongs to the HrcA family.

Negative regulator of class I heat shock genes (grpE-dnaK-dnaJ and groELS operons). Prevents heat-shock induction of these operons. The chain is Heat-inducible transcription repressor HrcA from Bacillus mycoides (strain KBAB4) (Bacillus weihenstephanensis).